A 504-amino-acid polypeptide reads, in one-letter code: MTTFTKLSEQEAPGISIHPDRRISKINPNIYAGFAEHMGRCIYGGIYDPGNPLSDENGFRKDVLEALKELKVPVIRYPGGNFTATYHWIDGVGPRDQRPARPELAWLGTETNQFGTDEFLKWCEVLGTEPYLCLNMGTGTLDEALAWVDYCNGTRDTYYANLRRKNGREEPYNVKYWALGNEVWGPWQVEQSTKEEYAHKAYQWAKALKLLDPSIELILCGKEGPTSWDYYTLKQTMLPVHSPLSTSAVPLIDMHSIHLYTAHSSHLPNVTAPLAAERAIEITSSLIDLARVENGVPPEQRRPTICFDEWNVWDPIRAEGSKGAEESYNLSDALAVGVWLNVFVRKSKDVGMACIAQSVNVISPLMTTKDGIVKQTTWWPLYLFSNYMRGWTISAHISVSAYEGETHPKWVRGVKDTPWLDVSATLGEDGYVNVVVINIHEEKGIEAKLDGPSGEVTVFTVTGDNPAVTNMKGKEEVGLVETKWDAQGPYVFPKHSLTLLRWKA.

N-linked (GlcNAc...) asparagine glycosylation is found at N81, N152, N269, and N329.

It belongs to the glycosyl hydrolase 51 family.

It localises to the secreted. The catalysed reaction is Hydrolysis of terminal non-reducing alpha-L-arabinofuranoside residues in alpha-L-arabinosides.. It participates in glycan metabolism; L-arabinan degradation. Functionally, alpha-L-arabinofuranosidase involved in the degradation of arabinoxylan, a major component of plant hemicellulose. Acts only on small linear 1,5-alpha-linked L-arabinofuranosyl oligosaccharides. This chain is Alpha-L-arabinofuranosidase C (abfC), found in Emericella nidulans (strain FGSC A4 / ATCC 38163 / CBS 112.46 / NRRL 194 / M139) (Aspergillus nidulans).